We begin with the raw amino-acid sequence, 1112 residues long: Zinc finger protein 654 (1112 aa).

The disordered stretch occupies residues 482-514; sequence PSSSLKKRVDQQSVEEDQSTGETDPDDASVVQP. The span at 494 to 508 shows a compositional bias: acidic residues; that stretch reads SVEEDQSTGETDPDD. 5 C2H2-type zinc fingers span residues 566–588, 738–763, 779–801, 807–831, and 836–860; these read FACV…LKNH, FKCP…RTVH, GKCK…LNRH, YFCL…TKSH, and AQCS…EAQH. Disordered regions lie at residues 885-906 and 997-1018; these read FSNE…KYST and VESQ…NLTS. Polar residues-rich tracts occupy residues 886-899 and 1002-1018; these read SNEN…VSTS and HSAL…NLTS. Phosphoserine occurs at positions 1107 and 1111.

Belongs to the krueppel C2H2-type zinc-finger protein family.

It is found in the nucleus. May be involved in transcriptional regulation. The sequence is that of Zinc finger protein 654 from Mus musculus (Mouse).